A 419-amino-acid chain; its full sequence is Serine hydroxymethyltransferase (419 aa).

(6S)-5,6,7,8-tetrahydrofolate-binding positions include Leu121 and 125-127 (GHL). N6-(pyridoxal phosphate)lysine is present on Lys230. A (6S)-5,6,7,8-tetrahydrofolate-binding site is contributed by 355–357 (SPF).

Belongs to the SHMT family. In terms of assembly, homodimer. Pyridoxal 5'-phosphate is required as a cofactor.

It localises to the cytoplasm. It carries out the reaction (6R)-5,10-methylene-5,6,7,8-tetrahydrofolate + glycine + H2O = (6S)-5,6,7,8-tetrahydrofolate + L-serine. It functions in the pathway one-carbon metabolism; tetrahydrofolate interconversion. Its pathway is amino-acid biosynthesis; glycine biosynthesis; glycine from L-serine: step 1/1. In terms of biological role, catalyzes the reversible interconversion of serine and glycine with tetrahydrofolate (THF) serving as the one-carbon carrier. This reaction serves as the major source of one-carbon groups required for the biosynthesis of purines, thymidylate, methionine, and other important biomolecules. Also exhibits THF-independent aldolase activity toward beta-hydroxyamino acids, producing glycine and aldehydes, via a retro-aldol mechanism. The polypeptide is Serine hydroxymethyltransferase (Streptococcus equi subsp. equi (strain 4047)).